The sequence spans 602 residues: Elongation factor 4 (602 aa).

A tr-type G domain is found at 7–189 (KRVRNFSIIA…AVVEKVPYPK (183 aa)). GTP is bound by residues 19–24 (DHGKST) and 136–139 (NKID).

This sequence belongs to the TRAFAC class translation factor GTPase superfamily. Classic translation factor GTPase family. LepA subfamily.

The protein resides in the cell membrane. It catalyses the reaction GTP + H2O = GDP + phosphate + H(+). Functionally, required for accurate and efficient protein synthesis under certain stress conditions. May act as a fidelity factor of the translation reaction, by catalyzing a one-codon backward translocation of tRNAs on improperly translocated ribosomes. Back-translocation proceeds from a post-translocation (POST) complex to a pre-translocation (PRE) complex, thus giving elongation factor G a second chance to translocate the tRNAs correctly. Binds to ribosomes in a GTP-dependent manner. The chain is Elongation factor 4 from Clostridium tetani (strain Massachusetts / E88).